Consider the following 564-residue polypeptide: Dihydroxy-acid dehydratase (564 aa).

Cys-50 is a [2Fe-2S] cluster binding site. Asp-82 provides a ligand contact to Mg(2+). Residue Cys-123 coordinates [2Fe-2S] cluster. Mg(2+) contacts are provided by Asp-124 and Lys-125. Position 125 is an N6-carboxylysine (Lys-125). Residue Cys-195 participates in [2Fe-2S] cluster binding. A Mg(2+)-binding site is contributed by Glu-447. The active-site Proton acceptor is Ser-473.

Belongs to the IlvD/Edd family. Homodimer. It depends on [2Fe-2S] cluster as a cofactor. Mg(2+) serves as cofactor.

It carries out the reaction (2R)-2,3-dihydroxy-3-methylbutanoate = 3-methyl-2-oxobutanoate + H2O. The catalysed reaction is (2R,3R)-2,3-dihydroxy-3-methylpentanoate = (S)-3-methyl-2-oxopentanoate + H2O. It functions in the pathway amino-acid biosynthesis; L-isoleucine biosynthesis; L-isoleucine from 2-oxobutanoate: step 3/4. Its pathway is amino-acid biosynthesis; L-valine biosynthesis; L-valine from pyruvate: step 3/4. Functions in the biosynthesis of branched-chain amino acids. Catalyzes the dehydration of (2R,3R)-2,3-dihydroxy-3-methylpentanoate (2,3-dihydroxy-3-methylvalerate) into 2-oxo-3-methylpentanoate (2-oxo-3-methylvalerate) and of (2R)-2,3-dihydroxy-3-methylbutanoate (2,3-dihydroxyisovalerate) into 2-oxo-3-methylbutanoate (2-oxoisovalerate), the penultimate precursor to L-isoleucine and L-valine, respectively. This chain is Dihydroxy-acid dehydratase, found in Chloroflexus aggregans (strain MD-66 / DSM 9485).